We begin with the raw amino-acid sequence, 169 residues long: Lutropin/choriogonadotropin subunit beta (169 aa).

The signal sequence occupies residues 1–20 (METLQGLLLWMLLSVGGVWA). Intrachain disulfides connect Cys-29-Cys-77, Cys-43-Cys-92, Cys-46-Cys-130, Cys-54-Cys-108, Cys-58-Cys-110, and Cys-113-Cys-120. The N-linked (GlcNAc...) asparagine glycan is linked to Asn-33. The interval 131 to 169 (APQASSSSKDPPSQPLTSTSTPTPGASRRSSHPLPIKTS) is disordered. O-linked (GalNAc...) serine glycans are attached at residues Ser-138 and Ser-143. Over residues 145-158 (PLTSTSTPTPGASR) the composition is skewed to low complexity. Residue Thr-147 is glycosylated (O-linked (GalNAc...) threonine). The O-linked (GalNAc...) serine glycan is linked to Ser-148. An O-linked (GalNAc...) threonine glycan is attached at Thr-149. An O-linked (GalNAc...) serine glycan is attached at Ser-150. O-linked (GalNAc...) threonine glycans are attached at residues Thr-151 and Thr-153. O-linked (GalNAc...) serine glycosylation is found at Ser-157, Ser-160, Ser-161, and Ser-169.

This sequence belongs to the glycoprotein hormones subunit beta family. Heterodimer of a common alpha chain and a unique beta chain which confers biological specificity to thyrotropin, lutropin, follitropin and gonadotropin. Post-translationally, microheterogeneity at Asn-33. O-glycosylation appears to be responsible for the beta subunit contribution to the difference in LH-receptor binding activity between LSH-B and CG-B.

Its subcellular location is the secreted. Functionally, promotes spermatogenesis and ovulation by stimulating the testes and ovaries to synthesize steroids. The polypeptide is Lutropin/choriogonadotropin subunit beta (LHB) (Equus caballus (Horse)).